A 957-amino-acid chain; its full sequence is Exoribonuclease II, mitochondrial (957 aa).

The transit peptide at 1 to 54 directs the protein to the mitochondrion; sequence MNYRQLFLLQNVNLESNYLLKRVCLSLKLSPCKLTRKFHHACPSSSKVLKYFRI. The 341-residue stretch at 503-843 folds into the RNB domain; the sequence is RVDLRHLKAF…FTHHQIQSVL (341 aa).

The protein belongs to the RNR ribonuclease family.

The protein resides in the mitochondrion. The enzyme catalyses Exonucleolytic cleavage in the 3'- to 5'-direction to yield nucleoside 5'-phosphates.. Required for intron-independent turnover and processing of mitochondrial RNA. Participates in 3'-mtRNA processing where it hydrolyzes single-stranded RNA or partially double-stranded RNA with 3'-single-stranded tails. This Schizosaccharomyces pombe (strain 972 / ATCC 24843) (Fission yeast) protein is Exoribonuclease II, mitochondrial (rpm1).